Reading from the N-terminus, the 228-residue chain is UPF0758 protein CTC_02075 (228 aa).

The region spanning 106–228 (NITNPKDAAY…YISLKEKDIL (123 aa)) is the MPN domain. Residues H177, H179, and D190 each coordinate Zn(2+). The short motif at 177–190 (HNHPSGDTTPSKED) is the JAMM motif element.

This sequence belongs to the UPF0758 family.

This Clostridium tetani (strain Massachusetts / E88) protein is UPF0758 protein CTC_02075.